A 207-amino-acid polypeptide reads, in one-letter code: MKWSNKDGYPWSKIIHAEKFFDKVIQNDTRPGKWEWADVVSGLRDLDKDPRMNSERRYVAIVNEDVGLGETKGIGITPGLFCGCQLIHPGEEVTSHRHNSVALYFIVEGTGELEVEGEVYSYKPFDIMTCPAWSYHAWRATGDKDTLMYVIHDMALLAYMRALFWEEPKGSENIRHMVKGSTHTWSNTKAPEVSKTQAAKELLKQGE.

In terms of domain architecture, Cupin type-2 spans glutamine 85–isoleucine 151.

It carries out the reaction 5-nitrosalicylate + O2 = 2-oxo-3-(5-oxofuran-2-ylidene)propanoate + nitrite + H(+). In terms of biological role, dioxygenase that catalyzes the cleavage of the aromatic ring of 5-nitrosalicylate (5NSA) without prior removal of the nitro group in biodegradation of 5-nitroanthranilate. This Bradyrhizobium sp protein is 5-nitrosalicylic acid 1,2-dioxygenase (naaB).